The following is a 677-amino-acid chain: UPF0652 protein (677 aa).

Residues 38–84 (ETPGMCCECTDQPAEVVCLQCQDELCTVCSTSLHRRGSRRSHIFKNK) form a B box-type; atypical zinc finger. Positions 43, 46, 66, and 71 each coordinate Zn(2+). Over residues 91–111 (YDELNKRDRQPPLHGKEDEKV) the composition is skewed to basic and acidic residues. Disordered regions lie at residues 91 to 142 (YDEL…NNNI) and 156 to 192 (LNPL…IDED). The span at 113-126 (NNNNNNNNTNNTNN) shows a compositional bias: low complexity. The span at 163 to 178 (HTNQQRNGGGSNNHQI) shows a compositional bias: polar residues.

It belongs to the UPF0652 family.

This chain is UPF0652 protein, found in Dictyostelium discoideum (Social amoeba).